We begin with the raw amino-acid sequence, 102 residues long: Large ribosomal subunit protein bL21 (102 aa).

Belongs to the bacterial ribosomal protein bL21 family. Part of the 50S ribosomal subunit. Contacts protein L20.

Functionally, this protein binds to 23S rRNA in the presence of protein L20. The chain is Large ribosomal subunit protein bL21 from Marinomonas sp. (strain MWYL1).